The primary structure comprises 97 residues: Citrate lyase acyl carrier protein (97 aa).

Residue S14 is modified to O-(phosphoribosyl dephospho-coenzyme A)serine.

Belongs to the CitD family. As to quaternary structure, oligomer with a subunit composition of (alpha,beta,gamma)6.

The protein localises to the cytoplasm. Its function is as follows. Covalent carrier of the coenzyme of citrate lyase. This chain is Citrate lyase acyl carrier protein, found in Escherichia fergusonii (strain ATCC 35469 / DSM 13698 / CCUG 18766 / IAM 14443 / JCM 21226 / LMG 7866 / NBRC 102419 / NCTC 12128 / CDC 0568-73).